The chain runs to 338 residues: Ribosomal RNA small subunit methyltransferase H (338 aa).

Residues Gly53 to His55, Asp72, Tyr99, Asp123, and Gln130 each bind S-adenosyl-L-methionine. 2 disordered regions span residues Glu276–Gly297 and Thr304–Pro323.

Belongs to the methyltransferase superfamily. RsmH family.

The protein resides in the cytoplasm. It catalyses the reaction cytidine(1402) in 16S rRNA + S-adenosyl-L-methionine = N(4)-methylcytidine(1402) in 16S rRNA + S-adenosyl-L-homocysteine + H(+). Its function is as follows. Specifically methylates the N4 position of cytidine in position 1402 (C1402) of 16S rRNA. This chain is Ribosomal RNA small subunit methyltransferase H, found in Rhodococcus jostii (strain RHA1).